A 78-amino-acid polypeptide reads, in one-letter code: ATP synthase subunit c (78 aa).

A run of 2 helical transmembrane segments spans residues Ala9–Trp29 and Ala56–Val76.

It belongs to the ATPase C chain family. F-type ATPases have 2 components, F(1) - the catalytic core - and F(0) - the membrane proton channel. F(1) has five subunits: alpha(3), beta(3), gamma(1), delta(1), epsilon(1). F(0) has three main subunits: a(1), b(2) and c(10-14). The alpha and beta chains form an alternating ring which encloses part of the gamma chain. F(1) is attached to F(0) by a central stalk formed by the gamma and epsilon chains, while a peripheral stalk is formed by the delta and b chains.

Its subcellular location is the cell membrane. Its function is as follows. F(1)F(0) ATP synthase produces ATP from ADP in the presence of a proton or sodium gradient. F-type ATPases consist of two structural domains, F(1) containing the extramembraneous catalytic core and F(0) containing the membrane proton channel, linked together by a central stalk and a peripheral stalk. During catalysis, ATP synthesis in the catalytic domain of F(1) is coupled via a rotary mechanism of the central stalk subunits to proton translocation. Functionally, key component of the F(0) channel; it plays a direct role in translocation across the membrane. A homomeric c-ring of between 10-14 subunits forms the central stalk rotor element with the F(1) delta and epsilon subunits. This chain is ATP synthase subunit c, found in Malacoplasma penetrans (strain HF-2) (Mycoplasma penetrans).